The sequence spans 917 residues: Protein STE5 (917 aa).

Disordered stretches follow at residues 1-25 and 58-151; these read MMET…YSGT and FQRS…LSDN. The segment covering 16-25 has biased composition (polar residues); it reads FGSSTQYSGT. Positions 69 to 84 are enriched in low complexity; sequence SPSPISSSTFSFSPKS. Polar residues-rich tracts occupy residues 85-110 and 118-138; these read RVTS…STDY and TSSL…NLSR. Position 329 is a phosphoserine (Ser-329). Acidic residues predominate over residues 778-794; sequence HDDDDEEDNDDSTDNEL. A disordered region spans residues 778–821; that stretch reads HDDDDEEDNDDSTDNELDNSSGSLSDAESTTTIHIDSPFDNENA. Residues 799-821 show a composition bias toward polar residues; it reads GSLSDAESTTTIHIDSPFDNENA.

It to yeast FAR1. Post-translationally, may be regulated at the phosphorylation level, and by the mating type of the cell and depends on an intact pheromone-response pathway.

Its subcellular location is the cytoplasm. In terms of biological role, component of the pheromone signal transduction pathway. It mediates pheromone signals acting between STE20 and STE11. It is absolutely required for pheromone-induced transcription of FUS1. May play a role in cell-cycle arrest in response to pheromone. This Saccharomyces cerevisiae (strain ATCC 204508 / S288c) (Baker's yeast) protein is Protein STE5 (STE5).